Consider the following 636-residue polypeptide: Threonine--tRNA ligase (636 aa).

The 63-residue stretch at 1–63 folds into the TGS domain; the sequence is MPMITITLPD…EHDASLRIIT (63 aa). The interval 245–536 is catalytic; it reads DHRKIGKAQD…LIEHHAGAFP (292 aa). Residues C336, H387, and H513 each coordinate Zn(2+).

This sequence belongs to the class-II aminoacyl-tRNA synthetase family. In terms of assembly, homodimer. It depends on Zn(2+) as a cofactor.

The protein resides in the cytoplasm. The catalysed reaction is tRNA(Thr) + L-threonine + ATP = L-threonyl-tRNA(Thr) + AMP + diphosphate + H(+). Its function is as follows. Catalyzes the attachment of threonine to tRNA(Thr) in a two-step reaction: L-threonine is first activated by ATP to form Thr-AMP and then transferred to the acceptor end of tRNA(Thr). Also edits incorrectly charged L-seryl-tRNA(Thr). In Xanthomonas campestris pv. campestris (strain 8004), this protein is Threonine--tRNA ligase.